The sequence spans 391 residues: Putative alpha-ketoglutarate-dependent sulfonate dioxygenase (391 aa).

Fe cation-binding residues include H204 and D206. 2-oxoglutarate is bound by residues T231 and W338. Residue H353 coordinates Fe cation. Residues R364 and R368 each contribute to the 2-oxoglutarate site.

It belongs to the TfdA dioxygenase family. Fe(2+) is required as a cofactor.

The protein operates within organosulfur degradation; alkanesulfonate degradation. In terms of biological role, acts as an alpha-ketoglutarate-dependent dioxygenase active on sulfonates. This Schizosaccharomyces pombe (strain 972 / ATCC 24843) (Fission yeast) protein is Putative alpha-ketoglutarate-dependent sulfonate dioxygenase.